A 580-amino-acid chain; its full sequence is Potassium-transporting ATPase potassium-binding subunit (580 aa).

The next 10 helical transmembrane spans lie at 3-23, 65-85, 136-156, 179-199, 263-283, 293-313, 399-419, 436-456, 504-524, and 546-566; these read ASGALQPALYLAVLIGLSVPL, DYAFAVLAFNLAGLLVLYALQ, GLGVQNFVSAATGMAVLVALI, LYILLPLSLLLAVLLVSQGVV, LSNFLEMLAILLIPAALCHTF, GWAVLAAMTAIFAVLLVACVA, GLYGMLMFVVIAVFVAGLMVG, MASLVVLFPAITVLVGTAIAV, AIGVAMLVGRYAVIVPVLALA, and LFVGLLTGTVLLVGALTFVPA.

This sequence belongs to the KdpA family. In terms of assembly, the system is composed of three essential subunits: KdpA, KdpB and KdpC.

Its subcellular location is the cell inner membrane. Part of the high-affinity ATP-driven potassium transport (or Kdp) system, which catalyzes the hydrolysis of ATP coupled with the electrogenic transport of potassium into the cytoplasm. This subunit binds the periplasmic potassium ions and delivers the ions to the membrane domain of KdpB through an intramembrane tunnel. This is Potassium-transporting ATPase potassium-binding subunit from Sorangium cellulosum (strain So ce56) (Polyangium cellulosum (strain So ce56)).